Here is a 97-residue protein sequence, read N- to C-terminus: Exodeoxyribonuclease 7 small subunit (97 aa).

Residues 1 to 22 (MAKTASPGATPPGNGTEPLPDN) are disordered.

Belongs to the XseB family. In terms of assembly, heterooligomer composed of large and small subunits.

It localises to the cytoplasm. It carries out the reaction Exonucleolytic cleavage in either 5'- to 3'- or 3'- to 5'-direction to yield nucleoside 5'-phosphates.. Functionally, bidirectionally degrades single-stranded DNA into large acid-insoluble oligonucleotides, which are then degraded further into small acid-soluble oligonucleotides. The sequence is that of Exodeoxyribonuclease 7 small subunit from Burkholderia cenocepacia (strain HI2424).